A 105-amino-acid polypeptide reads, in one-letter code: Putative membrane protein insertion efficiency factor (105 aa).

A disordered region spans residues 76–105; it reads GHPGGVDPVPPGPHETPRKTSTHDDEPPSR. The span at 90–105 shows a compositional bias: basic and acidic residues; that stretch reads ETPRKTSTHDDEPPSR.

This sequence belongs to the UPF0161 family.

The protein resides in the cell inner membrane. In terms of biological role, could be involved in insertion of integral membrane proteins into the membrane. This chain is Putative membrane protein insertion efficiency factor, found in Chromohalobacter salexigens (strain ATCC BAA-138 / DSM 3043 / CIP 106854 / NCIMB 13768 / 1H11).